We begin with the raw amino-acid sequence, 236 residues long: UPF0257 lipoprotein YnfC (236 aa).

The first 16 residues, 1–16, serve as a signal peptide directing secretion; that stretch reads MKKPLLLTLLCMILAG. Cys-17 carries N-palmitoyl cysteine lipidation. Cys-17 carries the S-diacylglycerol cysteine lipid modification.

Belongs to the UPF0257 family.

Its subcellular location is the cell membrane. This Salmonella paratyphi C (strain RKS4594) protein is UPF0257 lipoprotein YnfC.